The primary structure comprises 180 residues: DNA replication regulator protein HobA (180 aa).

Positions 17, 27, 140, 143, and 176 each coordinate Ca(2+).

Forms dimers and homotetramers. Interacts with domains I and II (residues 1-112) of DnaA. In a crystal with domains I and II of DnaA HobA forms tetramers with DnaA fragments bound at the dimer interface of the tetramer. It depends on Ca(2+) as a cofactor.

In terms of biological role, required for DNA replication initiation. Increases binding of DnaA to oriC region. This chain is DNA replication regulator protein HobA, found in Helicobacter pylori (strain ATCC 700392 / 26695) (Campylobacter pylori).